The sequence spans 152 residues: Large-conductance mechanosensitive channel (152 aa).

Transmembrane regions (helical) follow at residues 14–34 and 81–101; these read VIDL…VTSL and GLFL…FIVI.

This sequence belongs to the MscL family. In terms of assembly, homopentamer.

The protein localises to the cell membrane. In terms of biological role, channel that opens in response to stretch forces in the membrane lipid bilayer. May participate in the regulation of osmotic pressure changes within the cell. This chain is Large-conductance mechanosensitive channel, found in Clostridium perfringens (strain ATCC 13124 / DSM 756 / JCM 1290 / NCIMB 6125 / NCTC 8237 / Type A).